A 1486-amino-acid chain; its full sequence is Chromosome partition protein MukB (1486 aa).

Position 34–41 (34–41) interacts with ATP; that stretch reads GGNGAGKS. Coiled coils occupy residues 326 to 418, 444 to 480, and 509 to 603; these read LEAD…QYNQ, LETFQAKELEATEKMLSLEQKMSMAQTAHSQFEQAYQ, and RHLA…RAPV. Residues 666 to 783 are flexible hinge; the sequence is PGGSEDQRLN…EVPLFGRAAR (118 aa). Coiled-coil stretches lie at residues 835 to 923, 977 to 1115, and 1209 to 1266; these read EAEI…AKLE, EMLS…TAKA, and VEAI…QNVS.

This sequence belongs to the SMC family. MukB subfamily. In terms of assembly, homodimerization via its hinge domain. Binds to DNA via its C-terminal region. Interacts, and probably forms a ternary complex, with MukE and MukF via its C-terminal region. The complex formation is stimulated by calcium or magnesium. Interacts with tubulin-related protein FtsZ.

Its subcellular location is the cytoplasm. The protein resides in the nucleoid. Its function is as follows. Plays a central role in chromosome condensation, segregation and cell cycle progression. Functions as a homodimer, which is essential for chromosome partition. Involved in negative DNA supercoiling in vivo, and by this means organize and compact chromosomes. May achieve or facilitate chromosome segregation by condensation DNA from both sides of a centrally located replisome during cell division. The sequence is that of Chromosome partition protein MukB from Escherichia coli O157:H7.